A 224-amino-acid chain; its full sequence is LexA repressor (224 aa).

The H-T-H motif DNA-binding region spans R31–Q51. Catalysis depends on for autocatalytic cleavage activity residues S142 and K179.

This sequence belongs to the peptidase S24 family. In terms of assembly, homodimer.

The catalysed reaction is Hydrolysis of Ala-|-Gly bond in repressor LexA.. In terms of biological role, represses a number of genes involved in the response to DNA damage (SOS response), including recA and lexA. In the presence of single-stranded DNA, RecA interacts with LexA causing an autocatalytic cleavage which disrupts the DNA-binding part of LexA, leading to derepression of the SOS regulon and eventually DNA repair. This Verminephrobacter eiseniae (strain EF01-2) protein is LexA repressor.